The following is a 585-amino-acid chain: Sodium/calcium exchanger NCL (585 aa).

Transmembrane regions (helical) follow at residues 83–103, 106–126, 149–169, 212–232, and 239–259; these read VFLILVYGFLMFTAATYLSAG, LLLEILGPGIVGGLFLPMLGA, VSVGMGLLAGSTVMLLTVIWG, IMAISVIPFVIVQLPQMLGST, and VLIALILSVLMLISYCVYQVF. EF-hand domains lie at 299-334 and 339-374; these read PDEHVIRKLFLTIDANNDGHLSAAELKALIIGISFE and DKDDAVGKVLQDFDKTLDEQVDQEEFVRGIKQWLIQ. Aspartate 312, asparagine 314, aspartate 316, histidine 318, glutamate 323, aspartate 352, aspartate 356, glutamine 358, and glutamate 363 together coordinate Ca(2+). 2 helical membrane passes run 427 to 447 and 457 to 477; these read WITIKAALLLLLGAAIAAAFA and FSAATGIPSFFISFIALPLAT. N-linked (GlcNAc...) asparagine glycosylation is present at asparagine 478. 3 helical membrane passes run 505-525, 532-552, and 558-578; these read CGGVTMNNILCLSVFLAIVYV, FSSEVLVILIVCLVMGGFASF, and LWTCFIAYLLYPFSLGLVYIL.

It belongs to the Ca(2+):cation antiporter (CaCA) (TC 2.A.19) family. In terms of tissue distribution, expressed in roots, leaves, stems, petals, stamens, ovules and siliques.

It is found in the cell membrane. The protein resides in the vacuole membrane. Functionally, possesses sodium/calcium exchanger (NCX) activity when expressed in a heterologous mammalian CHO-K1 cell system. Does not possess cation/proton exchanger (CAX) or sodium/proton (NHX) activity when expressed in a heterologous yeast cell system. Has the ability to bind calcium in vitro. Participates in the maintenance of calcium homeostasis. May play a role in auxin response, diurnal rhythm and flowering time. Involved in salt stress response. This chain is Sodium/calcium exchanger NCL, found in Arabidopsis thaliana (Mouse-ear cress).